The chain runs to 99 residues: A-type ATP synthase subunit F (99 aa).

It belongs to the V-ATPase F subunit family. As to quaternary structure, has multiple subunits with at least A(3), B(3), C, D, E, F, H, I and proteolipid K(x).

It is found in the cell membrane. Component of the A-type ATP synthase that produces ATP from ADP in the presence of a proton gradient across the membrane. The chain is A-type ATP synthase subunit F from Methanocella arvoryzae (strain DSM 22066 / NBRC 105507 / MRE50).